A 421-amino-acid chain; its full sequence is Glutamyl-tRNA reductase (421 aa).

Substrate contacts are provided by residues 49–52 (TCNR), S109, 114–116 (EAQ), and Q120. The active-site Nucleophile is C50. Residue 189–194 (GAGEMC) coordinates NADP(+).

Belongs to the glutamyl-tRNA reductase family. As to quaternary structure, homodimer.

It carries out the reaction (S)-4-amino-5-oxopentanoate + tRNA(Glu) + NADP(+) = L-glutamyl-tRNA(Glu) + NADPH + H(+). It participates in porphyrin-containing compound metabolism; protoporphyrin-IX biosynthesis; 5-aminolevulinate from L-glutamyl-tRNA(Glu): step 1/2. Its function is as follows. Catalyzes the NADPH-dependent reduction of glutamyl-tRNA(Glu) to glutamate 1-semialdehyde (GSA). The polypeptide is Glutamyl-tRNA reductase (Magnetococcus marinus (strain ATCC BAA-1437 / JCM 17883 / MC-1)).